The chain runs to 161 residues: uncharacterized protein (161 aa).

Disordered stretches follow at residues 47 to 83 (KPAK…NNIN) and 104 to 137 (RRLQ…SKNY). A compositionally biased stretch (basic residues) spans 50–64 (KRNIHGHNNHTRSSN). 2 stretches are compositionally biased toward low complexity: residues 73 to 83 (NINHNNNNNIN) and 115 to 130 (SSSS…TNDN).

This is an uncharacterized protein from Dictyostelium discoideum (Social amoeba).